The primary structure comprises 935 residues: Progesterone receptor (935 aa).

A disordered region spans residues 1–49; that stretch reads MTELKAKGXRAPHVAGSPSSPKVXSPLPCRQAAXPFPGSQTSDTLPEVS. Residues 1–164 form an AF3; mediates transcriptional activation region; the sequence is MTELKAKGXR…SATQRVLSRL (164 aa). The tract at residues 1 to 568 is modulating, Pro-Rich; it reads MTELKAKGXR…YSFESLPQKI (568 aa). Positions 17–28 are enriched in low complexity; it reads SPSSPKVXSPLP. Ser-20 is modified (phosphoserine). The LXXL motif 1 signature appears at 55–59; the sequence is LDGLL. Residues 61 to 255 are disordered; the sequence is PRICQGQDPP…GAAAGGGAAA (195 aa). Position 81 is a phosphoserine (Ser-81). Residues 115–119 carry the LXXL motif 2 motif; that stretch reads LDTLW. 2 positions are modified to phosphoserine: Ser-130 and Ser-162. The segment at 165–305 is mediates transcriptional transrepression; the sequence is MSRSGGKAGD…LATTVTDFIH (141 aa). Residues 183–187 carry the Nuclear localization signal motif; sequence KVLPR. Phosphoserine is present on Ser-190. A compositionally biased stretch (polar residues) spans 191 to 203; the sequence is PSRQLLLPTTGSP. Ser-213 bears the Phosphoserine mark. Positions 220 to 231 are enriched in acidic residues; it reads EVEEEDGSESED. Over residues 232–246 the composition is skewed to low complexity; it reads SAGPLLKGKPRALGG. Phosphoserine; by MAPK1 is present on Ser-294. Positions 331–365 are disordered; that stretch reads GGAGAASAFAPPRSSPSASSTPVPGGDFPDCAYAP. A compositionally biased stretch (low complexity) spans 335–356; that stretch reads AASAFAPPRSSPSASSTPVPGG. Position 345 is a phosphoserine; by MAPK (Ser-345). Residue Lys-388 forms a Glycyl lysine isopeptide (Lys-Gly) (interchain with G-Cter in SUMO); alternate linkage. Residue Lys-388 forms a Glycyl lysine isopeptide (Lys-Gly) (interchain with G-Cter in ubiquitin); alternate linkage. Residue Ser-400 is modified to Phosphoserine; by CDK2. The tract at residues 415 to 452 is disordered; sequence PDFPLGPPPPLPPRAPPSRPGEAAVTAAPASASVSSAS. Residues 418–433 are compositionally biased toward pro residues; that stretch reads PLGPPPPLPPRAPPSR. Low complexity predominate over residues 434-452; it reads PGEAAVTAAPASASVSSAS. The segment at 456 to 548 is AF1; mediates transcriptional activation; the sequence is STLECILYKA…VYPPYLNYLR (93 aa). A Glycyl lysine isopeptide (Lys-Gly) (interchain with G-Cter in SUMO) cross-link involves residue Lys-533. 2 consecutive NR C4-type zinc fingers follow at residues 569–589 and 605–629; these read CLIC…CGSC and CAGR…LRKC. Positions 569–641 form a DNA-binding region, nuclear receptor; the sequence is CLICGDEASG…AGMVLGGRKF (73 aa). Position 678 is a phosphoserine (Ser-678). The NR LBD domain maps to 681–915; sequence QDIQLIPPLI…EFPEMMSEVI (235 aa). The interval 689-935 is AF2; mediates transcriptional activation; sequence LINLLLSIEP…MVKPLLFHKK (247 aa).

It belongs to the nuclear hormone receptor family. As to quaternary structure, interacts with SMARD1 and UNC45A. Interacts with CUEDC2; the interaction promotes ubiquitination, decreases sumoylation, and represses transcriptional activity. Interacts with PIAS3; the interaction promotes sumoylation of PR in a hormone-dependent manner, inhibits DNA-binding, and alters nuclear export. Interacts with SP1; the interaction requires ligand-induced phosphorylation on Ser-345 by ERK1/2-MAPK. Interacts with PRMT2. Interacts with NCOA2 and NCOA1. Interacts with KLF9. Interacts with GTF2B. Phosphorylated on multiple serine sites. Several of these sites are hormone-dependent. Phosphorylation on Ser-294 is highly hormone-dependent and modulates ubiquitination and sumoylation on Lys-388. Phosphorylation on Ser-345 also requires induction by hormone. Basal phosphorylation on Ser-81, Ser-162, Ser-190 and Ser-400 is increased in response to progesterone and can be phosphorylated in vitro by the CDK2-A1 complex. Increased levels of phosphorylation on Ser-400 also in the presence of EGF, heregulin, IGF, PMA and FBS. Phosphorylation at this site by CDK2 is ligand-independent, and increases nuclear translocation and transcriptional activity. Phosphorylation at Ser-162 and Ser-294, but not at Ser-190, is impaired during the G(2)/M phase of the cell cycle. Phosphorylation on Ser-345 by ERK1/2 MAPK is required for interaction with SP1. In terms of processing, sumoylation is hormone-dependent and represses transcriptional activity. Sumoylation on all three sites is enhanced by PIAS3. Desumoylated by SENP1. Sumoylation on Lys-388, the main site of sumoylation, is repressed by ubiquitination on the same site, and modulated by phosphorylation at Ser-294. Post-translationally, ubiquitination is hormone-dependent and represses sumoylation on the same site. Promoted by MAPK-mediated phosphorylation on Ser-294. Palmitoylated by ZDHHC7 and ZDHHC21. Palmitoylation is required for plasma membrane targeting and for rapid intracellular signaling via ERK and AKT kinases and cAMP generation.

It is found in the nucleus. Its subcellular location is the cytoplasm. The steroid hormones and their receptors are involved in the regulation of eukaryotic gene expression and affect cellular proliferation and differentiation in target tissues. Transcriptional activator of several progesteron-dependent promoters in a variety of cell types. Involved in activation of SRC-dependent MAPK signaling on hormone stimulation. The sequence is that of Progesterone receptor (PGR) from Ateles paniscus (Black spider monkey).